Reading from the N-terminus, the 711-residue chain is Polyribonucleotide nucleotidyltransferase (711 aa).

Residues Asp-490 and Asp-496 each contribute to the Mg(2+) site. The KH domain maps to 556-615 (PRIETMQVPTDKIREVIGSGGKVIREIVEVSGAKVDINDDGVIKIASANGEAIQKAYDMI). In terms of domain architecture, S1 motif spans 625-693 (GAVYTGKVVK…DRGKVRLSMK (69 aa)).

The protein belongs to the polyribonucleotide nucleotidyltransferase family. Requires Mg(2+) as cofactor.

It is found in the cytoplasm. The catalysed reaction is RNA(n+1) + phosphate = RNA(n) + a ribonucleoside 5'-diphosphate. Involved in mRNA degradation. Catalyzes the phosphorolysis of single-stranded polyribonucleotides processively in the 3'- to 5'-direction. The protein is Polyribonucleotide nucleotidyltransferase of Ruegeria sp. (strain TM1040) (Silicibacter sp.).